Consider the following 224-residue polypeptide: MKKRAIVLLSGGLDSATVLAMANAQGFETYALSMRYGQRHSSELEAAKKVAAALGAVRHEIVDLDLRRFGGSALTDDALEVPTTGVQEGIPITYVPARNTIMLSLALGWAEAVGARDLFFGANAVDYSGYPDCRPEYVAAYETLANLATKAGVEGDHIRVNAPIIAMTKAEIIQAGARLGVDYSLTVSCYQADDEGRACGVCDSCRIRRAGFEAAAVPDPTRYR.

9 to 19 (LSGGLDSATVL) contacts ATP. Zn(2+)-binding residues include cysteine 189, cysteine 199, cysteine 202, and cysteine 205.

It belongs to the QueC family. Requires Zn(2+) as cofactor.

It carries out the reaction 7-carboxy-7-deazaguanine + NH4(+) + ATP = 7-cyano-7-deazaguanine + ADP + phosphate + H2O + H(+). The protein operates within purine metabolism; 7-cyano-7-deazaguanine biosynthesis. Catalyzes the ATP-dependent conversion of 7-carboxy-7-deazaguanine (CDG) to 7-cyano-7-deazaguanine (preQ(0)). The protein is 7-cyano-7-deazaguanine synthase of Ralstonia nicotianae (strain ATCC BAA-1114 / GMI1000) (Ralstonia solanacearum).